The primary structure comprises 315 residues: 4-diphosphocytidyl-2-C-methyl-D-erythritol kinase (315 aa).

Residue K8 is part of the active site. Residue 93-103 (PVAAGLAGGSS) coordinates ATP. D135 is a catalytic residue.

This sequence belongs to the GHMP kinase family. IspE subfamily.

The catalysed reaction is 4-CDP-2-C-methyl-D-erythritol + ATP = 4-CDP-2-C-methyl-D-erythritol 2-phosphate + ADP + H(+). It functions in the pathway isoprenoid biosynthesis; isopentenyl diphosphate biosynthesis via DXP pathway; isopentenyl diphosphate from 1-deoxy-D-xylulose 5-phosphate: step 3/6. Its function is as follows. Catalyzes the phosphorylation of the position 2 hydroxy group of 4-diphosphocytidyl-2C-methyl-D-erythritol. This Heliobacterium modesticaldum (strain ATCC 51547 / Ice1) protein is 4-diphosphocytidyl-2-C-methyl-D-erythritol kinase.